The chain runs to 191 residues: Probable DNA-directed RNA polymerase subunit delta (191 aa).

Positions 14–83 (LSMIEVARAI…GENKWGLRSW (70 aa)) constitute an HTH HARE-type domain. Positions 119–191 (EDAIDYRDDD…EDEEDEEPVL (73 aa)) are disordered.

As to quaternary structure, RNAP is composed of a core of 2 alpha, a beta and a beta' subunits. The core is associated with a delta subunit and one of several sigma factors.

Functionally, participates in both the initiation and recycling phases of transcription. In the presence of the delta subunit, RNAP displays an increased specificity of transcription, a decreased affinity for nucleic acids, and an increased efficiency of RNA synthesis because of enhanced recycling. The protein is Probable DNA-directed RNA polymerase subunit delta of Streptococcus pyogenes serotype M6 (strain ATCC BAA-946 / MGAS10394).